A 2547-amino-acid chain; its full sequence is Piezo-type mechanosensitive ion channel component 1 (2547 aa).

At 1–12 (MEPHVLGAGLYW) the chain is on the cytoplasmic side. The helical transmembrane segment at 13-25 (LLLPCTLLAASLL) threads the bilayer. The Extracellular portion of the chain corresponds to 26–28 (RFN). Residues 29-44 (ALSLVYLLFLLLLPWL) form a helical membrane-spanning segment. Residues 45–58 (PGPSRHSIPGHTGR) are Cytoplasmic-facing. Residues 59–81 (LLRALLCLSLLFLVAHLAFQICL) form a helical membrane-spanning segment. The Extracellular segment spans residues 82–121 (HTVPHLDQFLGQNGSLWVKVSQHIGVTRLDLKDIFNTTRL). Residue Asn94 is glycosylated (N-linked (GlcNAc...) asparagine). Residues 122 to 138 (VAPDLGVLLASSLCLGL) traverse the membrane as a helical segment. Residues 139 to 201 (CGRLTRKAGQ…ASRFRVTAHW (63 aa)) lie on the Cytoplasmic side of the membrane. The helical transmembrane segment at 202–221 (LLMTSGRTLVIVLLALAGIA) threads the bilayer. The Extracellular portion of the chain corresponds to 222–223 (HP). The helical transmembrane segment at 224–243 (SAFSSIYLVVFLAICTWWSC) threads the bilayer. Over 244–254 (HFPLSPLGFNT) the chain is Cytoplasmic. A helical transmembrane segment spans residues 255 to 275 (LCVMVSCFGAGHLICLYCYQT). The Extracellular portion of the chain corresponds to 276 to 316 (PFIQDMLPPGNIWARLFGLKNFVDLPNYSSPNALVLNTKHA). Residues 317–337 (WPIYVSPGILLLLYYTATSLL) form a helical membrane-spanning segment. At 338–424 (KLHKSCPSEL…EMSPLHGLGH (87 aa)) the chain is on the cytoplasmic side. Residues 347 to 387 (LRKETPREDEEHELELDHLEPEPQARDATQGEMPMTTEPDL) form a disordered region. The segment covering 361–371 (ELDHLEPEPQA) has biased composition (basic and acidic residues). A helical membrane pass occupies residues 425-445 (LIMDQSYVCALIAMMVWSIMY). Over 446-447 (HS) the chain is Extracellular. Residues 448–463 (WLTFVLLLWACLIWTV) traverse the membrane as a helical segment. The Cytoplasmic segment spans residues 464–468 (RSRHQ). A helical membrane pass occupies residues 469-491 (LAMLCSPCILLYGLTLCCLRYVW). The Extracellular portion of the chain corresponds to 492–518 (AMELPELPTTLGPVSLHQLGLEHTRYP). A helical membrane pass occupies residues 519 to 536 (CLDLGAMLLYLLTFWLLL). Over 537–580 (RQFVKEKLLKKQKVPAALLEVTVADTEPTQTQTLLRSLGELVTG) the chain is Cytoplasmic. A helical transmembrane segment spans residues 581 to 601 (IYVKYWIYVCAGMFIVVSFAG). Residue Arg602 is a topological domain, extracellular. The helical transmembrane segment at 603–623 (LVVYKIVYMFLFLLCLTLFQV) threads the bilayer. Residues 624-633 (YYTLWRKLLR) lie on the Cytoplasmic side of the membrane. Residues 634–655 (VFWWLVVAYTMLVLIAVYTFQF) form a helical membrane-spanning segment. Over 656–685 (QDFPTYWRNLTGFTDEQLGDLGLEQFSVSE) the chain is Extracellular. The chain crosses the membrane as a helical span at residues 686-702 (LFSSILIPGFFLLACIL). Topologically, residues 703–811 (QLHYFHRPFM…RRLLELHVFK (109 aa)) are cytoplasmic. Ser758 carries the post-translational modification Phosphoserine. Residues 812 to 823 (LVALYTVWVALK) traverse the membrane as a helical segment. Residues 824 to 826 (EVS) are Extracellular-facing. A helical transmembrane segment spans residues 827-840 (VMNLLLVVLWAFAL). The Cytoplasmic portion of the chain corresponds to 841 to 854 (PYPRFRPMASCLST). The chain crosses the membrane as a helical span at residues 855–869 (VWTCIIIVCKMLYQL). Residues 870–921 (KIVNPHEYSSNCTEPFPNNTNLQPLEINQSLLYRGPVDPANWFGVRKGYPNL) are Extracellular-facing. A helical transmembrane segment spans residues 922–949 (GYIQNHLQILLLLVFEAVVYRRQEHYRR). Residues 950–989 (QHQQAPLPAQAVCADGTRQRLDQDLLSCLKYFINFFFYKF) lie on the Cytoplasmic side of the membrane. A helical membrane pass occupies residues 990–1005 (GLEICFLMAVNVIGQR). Topologically, residues 1006–1007 (MN) are extracellular. A helical transmembrane segment spans residues 1008–1023 (FMVILHGCWLVAILTR). Residues 1024-1036 (RRREAIARLWPNY) are Cytoplasmic-facing. Residues 1037 to 1052 (CLFLTLFLLYQYLLCL) traverse the membrane as a helical segment. Over 1053-1091 (GMPPALCIDYPWRWSKAIPMNSALIKWLYLPDFFRAPNS) the chain is Extracellular. A helical transmembrane segment spans residues 1092–1113 (TNLISDFLLLLCASQQWQVFSA). Residues 1114-1148 (ERTEEWQRMAGINTDHLEPLRGEPNPIPNFIHCRS) are Cytoplasmic-facing. The chain crosses the membrane as a helical span at residues 1149–1175 (YLDMLKVAVFRYLFWLVLVVVFVAGAT). The Extracellular portion of the chain corresponds to 1176–1180 (RISIF). Residues 1181-1199 (GLGYLLACFYLLLFGTTLL) form a helical membrane-spanning segment. Residues 1200-1212 (QKDTRAQLVLWDC) are Cytoplasmic-facing. Residues 1213–1231 (LILYNVTVIISKNMLSLLS) form a helical membrane-spanning segment. The Extracellular portion of the chain corresponds to 1232 to 1280 (CVFVEQMQSNFCWVIQLFSLVCTVKGYYDPKEMMTRDRDCLLPVEEAGI). Residues 1281-1297 (IWDSICFFFLLLQRRIF) form a helical membrane-spanning segment. Residues 1298–1656 (LSHYFLHVSA…ELLLDRRLHI (359 aa)) lie on the Cytoplasmic side of the membrane. Residues 1334–1365 (HRQIEEKSLAQLKRQMKRIRAKQEKYRQSQAS) adopt a coiled-coil conformation. Disordered stretches follow at residues 1354 to 1396 (AKQE…RRQW), 1456 to 1480 (RRER…DVEP), and 1567 to 1610 (TLSG…NTRS). Residues 1361–1372 (QSQASRGQLQSK) show a composition bias toward polar residues. The span at 1376-1392 (DPSQEPGPDSPGGSSPP) shows a compositional bias: low complexity. Ser1385 and Ser1390 each carry phosphoserine. Positions 1592 to 1610 (SSMTDDTSSPLSTGYNTRS) are enriched in polar residues. 3 positions are modified to phosphoserine: Ser1627, Ser1631, and Ser1646. A helical membrane pass occupies residues 1657-1700 (PELEEAERFEAQQGRTLRLLRAGYQCVAAHSELLCYFIIILNHM). At 1701–1704 (VTAS) the chain is on the extracellular side. The helical transmembrane segment at 1705 to 1720 (AASLVLPVLVFLWAML) threads the bilayer. The Cytoplasmic segment spans residues 1721–1728 (TIPRPSKR). Residues 1729–1747 (FWMTAIVFTEVMVVTKYLF) traverse the membrane as a helical segment. Residues 1748-1779 (QFGFFPWNSYVVLRRYENKPYFPPRILGLEKT) lie on the Extracellular side of the membrane. Residues 1780–1801 (DSYIKYDLVQLMALFFHRSQLL) form a helical membrane-spanning segment. Residues 1802-1976 (CYGLWDHEED…HTKYRAATDV (175 aa)) are Cytoplasmic-facing. Composition is skewed to basic and acidic residues over residues 1816-1837 (DHCR…KLES) and 1855-1880 (PRDH…DLKP). The interval 1816 to 1931 (DHCRSSVKDR…RPRHTQEKSK (116 aa)) is disordered. Basic residues predominate over residues 1881 to 1894 (RHTRHISIRFRRRK). The span at 1912–1931 (GEGKETTERKRPRHTQEKSK) shows a compositional bias: basic and acidic residues. A helical transmembrane segment spans residues 1977 to 1996 (YALMFLADIVDIIIIIFGFW). At 1997–2016 (AFGKHSAATDIASSLSDDQV) the chain is on the extracellular side. Residues 2017–2033 (PQAFLFMLLVQFGTMVI) form a helical membrane-spanning segment. Topologically, residues 2034–2047 (DRALYLRKTVLGKL) are cytoplasmic. A helical membrane pass occupies residues 2048–2068 (AFQVVLVVAIHIWMFFILPAV). Over 2069 to 2076 (TERMFSQN) the chain is Extracellular. A helical transmembrane segment spans residues 2077-2092 (AVAQLWYFVKCIYFAL). The Cytoplasmic segment spans residues 2093 to 2192 (SAYQIRCGYP…KKKIVKYGMG (100 aa)). Residues 2193–2213 (GLIILFLIAIIWFPLLFMSLI) traverse the membrane as a helical segment. The Extracellular segment spans residues 2214–2457 (RSVVGVVNQP…IFSDKVSPPS (244 aa)). An intrachain disulfide couples Cys2437 to Cys2441. Residues 2458-2478 (LGFLAGYGIVGLYVSIVLVVG) form a helical membrane-spanning segment. At 2479–2547 (KFVRGFFSEI…TMIKWTRERE (69 aa)) the chain is on the cytoplasmic side.

The protein belongs to the PIEZO (TC 1.A.75) family. Homotrimer; the homotrimer forms a propeller-shaped Piezo channel with a cation-ion conducting pore. Heterotrimeric interaction may occur between PIEZO1 and PIEZO2. Interacts with PKD2. Interacts with STOMl3. Interacts with TMC1, TMC2, PCDG15 and CIB2; the interaction may be part of the MET complex. Interacts with MDFIC (via C-terminus); the interaction prolongs Piezo channel inactivation. Interacts with MDFI (via C-terminus); the interaction prolongs Piezo channel inactivation. Expressed in bladder, colon, kidney and skin. Also expressed in bone marrow, liver, lung, spleen and erythrocytes (at protein level). Expressed in myoblasts (at protein level). Expressed in red blood cells. Expressed in cochlear inner and outer hair cells (IHCs and OHCs) and vestibular organ HCs.

The protein localises to the endoplasmic reticulum membrane. Its subcellular location is the endoplasmic reticulum-Golgi intermediate compartment membrane. It localises to the cell membrane. The protein resides in the cell projection. It is found in the lamellipodium membrane. The catalysed reaction is K(+)(in) = K(+)(out). It catalyses the reaction Na(+)(in) = Na(+)(out). The enzyme catalyses Ca(2+)(in) = Ca(2+)(out). It carries out the reaction Mg(2+)(in) = Mg(2+)(out). Regulated by auxillary subunits MDFIC and MDFI. Down-regulated by phosphatidylserines exposed on the cell surface. Divalent ions decrease the single-channel permeability of K(+). Its function is as follows. Pore-forming subunit of the mechanosensitive non-specific cation Piezo channel required for rapidly adapting mechanically activated (MA) currents and has a key role in sensing touch and tactile pain. Piezo channels are homotrimeric three-blade propeller-shaped structures that utilize a cap-motion and plug-and-latch mechanism to gate their ion-conducting pathways. Generates currents characterized by a linear current-voltage relationship that are sensitive to ruthenium red and gadolinium. Conductance to monovalent alkali ions is highest for K(+), intermediate for Na(+) and lowest for Li(+). Divalent ions except for Mn(2+) permeate the channel but more slowly than the monovalent ions and they also reduce K(+) currents. Plays a key role in epithelial cell adhesion by maintaining integrin activation through R-Ras recruitment to the ER, most probably in its activated state, and subsequent stimulation of calpain signaling. In inner ear hair cells, PIEZO1/2 subunits may constitute part of the mechanotransducer (MET) non-selective cation channel complex where they may act as pore-forming ion-conducting component in the complex. In the kidney, may contribute to the detection of intraluminal pressure changes and to urine flow sensing. Acts as a shear-stress sensor that promotes endothelial cell organization and alignment in the direction of blood flow through calpain activation. Plays a key role in blood vessel formation and vascular structure in both development and adult physiology. Acts as a sensor of phosphatidylserine (PS) flipping at the plasma membrane and governs morphogenesis of muscle cells. In myoblasts, flippase-mediated PS enrichment at the inner leaflet of plasma membrane triggers channel activation and Ca(2+) influx followed by Rho GTPases signal transduction, leading to assembly of cortical actomyosin fibers and myotube formation. The chain is Piezo-type mechanosensitive ion channel component 1 from Mus musculus (Mouse).